The following is a 42-amino-acid chain: uncharacterized protein (42 aa).

Residues 18 to 38 (VGAISLTVMMILFFIAIVWFL) traverse the membrane as a helical segment.

The protein localises to the host membrane. This is an uncharacterized protein from His1 virus (isolate Australia/Victoria) (His1V).